A 416-amino-acid chain; its full sequence is Gamma-glutamyl phosphate reductase (416 aa).

The protein belongs to the gamma-glutamyl phosphate reductase family.

Its subcellular location is the cytoplasm. It catalyses the reaction L-glutamate 5-semialdehyde + phosphate + NADP(+) = L-glutamyl 5-phosphate + NADPH + H(+). Its pathway is amino-acid biosynthesis; L-proline biosynthesis; L-glutamate 5-semialdehyde from L-glutamate: step 2/2. Its function is as follows. Catalyzes the NADPH-dependent reduction of L-glutamate 5-phosphate into L-glutamate 5-semialdehyde and phosphate. The product spontaneously undergoes cyclization to form 1-pyrroline-5-carboxylate. The polypeptide is Gamma-glutamyl phosphate reductase (Streptococcus mutans serotype c (strain ATCC 700610 / UA159)).